We begin with the raw amino-acid sequence, 397 residues long: Riboflavin biosynthesis protein RibBA (397 aa).

The DHBP synthase stretch occupies residues 1-199 (MFHRIEEALE…IEDLIAYRRH (199 aa)). D-ribulose 5-phosphate-binding positions include 26–27 (RE), Asp31, 138–142 (RAGHT), and Glu162. Mg(2+) is bound at residue Glu27. His141 is a binding site for Mg(2+). The segment at 200 to 397 (HETLVTREVE…VNKLGHLLNL (198 aa)) is GTP cyclohydrolase II. 250–254 (RVHSE) contacts GTP. Residues Cys255, Cys266, and Cys268 each contribute to the Zn(2+) site. Residues Gln271, 293–295 (EGR), and Thr315 contribute to the GTP site. Asp327 functions as the Proton acceptor; for GTP cyclohydrolase activity in the catalytic mechanism. Arg329 (nucleophile; for GTP cyclohydrolase activity) is an active-site residue. GTP is bound by residues Thr350 and Lys355.

The protein in the N-terminal section; belongs to the DHBP synthase family. This sequence in the C-terminal section; belongs to the GTP cyclohydrolase II family. Requires Mg(2+) as cofactor. Mn(2+) serves as cofactor. The cofactor is Zn(2+).

The enzyme catalyses D-ribulose 5-phosphate = (2S)-2-hydroxy-3-oxobutyl phosphate + formate + H(+). It catalyses the reaction GTP + 4 H2O = 2,5-diamino-6-hydroxy-4-(5-phosphoribosylamino)-pyrimidine + formate + 2 phosphate + 3 H(+). Its pathway is cofactor biosynthesis; riboflavin biosynthesis; 2-hydroxy-3-oxobutyl phosphate from D-ribulose 5-phosphate: step 1/1. It functions in the pathway cofactor biosynthesis; riboflavin biosynthesis; 5-amino-6-(D-ribitylamino)uracil from GTP: step 1/4. Catalyzes the conversion of D-ribulose 5-phosphate to formate and 3,4-dihydroxy-2-butanone 4-phosphate. In terms of biological role, catalyzes the conversion of GTP to 2,5-diamino-6-ribosylamino-4(3H)-pyrimidinone 5'-phosphate (DARP), formate and pyrophosphate. This is Riboflavin biosynthesis protein RibBA from Bacillus cereus (strain AH187).